A 108-amino-acid polypeptide reads, in one-letter code: UPF0145 protein gll1048 (108 aa).

The protein belongs to the UPF0145 family.

This is UPF0145 protein gll1048 from Gloeobacter violaceus (strain ATCC 29082 / PCC 7421).